Here is a 399-residue protein sequence, read N- to C-terminus: Leu/Ile/Val-binding protein homolog 7 (399 aa).

A signal peptide spans 1-22 (MEKHLIALSVAALLAGAAPASA).

It belongs to the leucine-binding protein family.

Component of an amino-acid transport system. This chain is Leu/Ile/Val-binding protein homolog 7, found in Brucella melitensis biotype 1 (strain ATCC 23456 / CCUG 17765 / NCTC 10094 / 16M).